We begin with the raw amino-acid sequence, 304 residues long: Nucleotide-binding protein ROP_69550 (304 aa).

24–31 (GLSGAGLQ) lines the ATP pocket. Residue 75 to 78 (DVRS) coordinates GTP.

The protein belongs to the RapZ-like family.

In terms of biological role, displays ATPase and GTPase activities. In Rhodococcus opacus (strain B4), this protein is Nucleotide-binding protein ROP_69550.